Reading from the N-terminus, the 111-residue chain is Putative pterin-4-alpha-carbinolamine dehydratase (111 aa).

Belongs to the pterin-4-alpha-carbinolamine dehydratase family.

It catalyses the reaction (4aS,6R)-4a-hydroxy-L-erythro-5,6,7,8-tetrahydrobiopterin = (6R)-L-erythro-6,7-dihydrobiopterin + H2O. The sequence is that of Putative pterin-4-alpha-carbinolamine dehydratase from Marinobacter nauticus (strain ATCC 700491 / DSM 11845 / VT8) (Marinobacter aquaeolei).